The primary structure comprises 540 residues: MAKTIAYDEEARRGLERGLNALADAVKVTLGPKGRNVVLEKKWGAPTITNDGVSIAKEIELEDPYEKIGAELVKEVAKKTDDVAGDGTTTATVLAQALVREGLRNVAAGANPLGLKRGIEKAVEKVTETLLKGAKEVETKEQIAATAAISAGDQSIGDLIAEAMDKVGNEGVITVEESNTFGLQLELTEGMRFDKGYISGYFVTDPERQEAVLEDPYILLVSSKVSTVKDLLPLLEKVIGAGKPLLIIAEDVEGEALSTLVVNKIRGTFKSVAVKAPGFGDRRKAMLQDMAILTGGQVISEEVGLTLENADLSLLGKARKVVVTKDETTIVEGAGDTDAIAGRVAQIRQEIENSDSDYDREKLQERLAKLAGGVAVIKAGAATEVELKERKHRIEDAVRNAKAAVEEGIVAGGGVTLLQAAPTLDELKLEGDEATGANIVKVALEAPLKQIAFNSGLEPGVVAEKVRNLPAGHGLNAQTGVYEDLLAAGVADPVKVTRSALQNAASIAGLFLTTEAVVADKPEKEKASVPGGGDMGGMDF.

Residues 29–32, 86–90, Gly413, and Asp492 each bind ATP; these read TLGP and DGTTT. A disordered region spans residues 521–540; it reads KPEKEKASVPGGGDMGGMDF. The span at 530–540 shows a compositional bias: gly residues; that stretch reads PGGGDMGGMDF.

It belongs to the chaperonin (HSP60) family. Forms a cylinder of 14 subunits composed of two heptameric rings stacked back-to-back. Interacts with the co-chaperonin GroES.

The protein localises to the secreted. Its subcellular location is the capsule. The protein resides in the cell surface. It localises to the cell wall. The catalysed reaction is ATP + H2O + a folded polypeptide = ADP + phosphate + an unfolded polypeptide.. In terms of biological role, together with its co-chaperonin GroES, plays an essential role in assisting protein folding. The GroEL-GroES system forms a nano-cage that allows encapsulation of the non-native substrate proteins and provides a physical environment optimized to promote and accelerate protein folding. The sequence is that of Chaperonin GroEL 2 from Mycobacterium tuberculosis (strain ATCC 25177 / H37Ra).